The chain runs to 427 residues: Enolase (427 aa).

Gln-163 contacts (2R)-2-phosphoglycerate. Glu-205 (proton donor) is an active-site residue. Mg(2+) contacts are provided by Asp-242, Glu-285, and Asp-312. (2R)-2-phosphoglycerate is bound by residues Lys-337, Arg-366, Ser-367, and Lys-388. Lys-337 functions as the Proton acceptor in the catalytic mechanism.

The protein belongs to the enolase family. The cofactor is Mg(2+).

It localises to the cytoplasm. The protein localises to the secreted. Its subcellular location is the cell surface. It catalyses the reaction (2R)-2-phosphoglycerate = phosphoenolpyruvate + H2O. It functions in the pathway carbohydrate degradation; glycolysis; pyruvate from D-glyceraldehyde 3-phosphate: step 4/5. Catalyzes the reversible conversion of 2-phosphoglycerate (2-PG) into phosphoenolpyruvate (PEP). It is essential for the degradation of carbohydrates via glycolysis. This chain is Enolase, found in Burkholderia mallei (strain NCTC 10247).